Consider the following 268-residue polypeptide: Phosphate import ATP-binding protein PstB 2 (268 aa).

The region spanning 19-263 (YKVRNMAFFY…PKDKRTEDYI (245 aa)) is the ABC transporter domain. ATP is bound at residue 51–58 (GPSGCGKS).

The protein belongs to the ABC transporter superfamily. Phosphate importer (TC 3.A.1.7) family. In terms of assembly, the complex is composed of two ATP-binding proteins (PstB), two transmembrane proteins (PstC and PstA) and a solute-binding protein (PstS).

The protein localises to the cell inner membrane. It carries out the reaction phosphate(out) + ATP + H2O = ADP + 2 phosphate(in) + H(+). Functionally, part of the ABC transporter complex PstSACB involved in phosphate import. Responsible for energy coupling to the transport system. The sequence is that of Phosphate import ATP-binding protein PstB 2 from Gloeobacter violaceus (strain ATCC 29082 / PCC 7421).